The chain runs to 198 residues: NAD(P)H dehydrogenase (quinone) (198 aa).

A Flavodoxin-like domain is found at 4 to 189; sequence ILVLYYSMYG…SIARYQGEYV (186 aa). FMN contacts are provided by residues 10–15 and 78–80; these read SMYGHI and TRF. Tyr-12 lines the NAD(+) pocket. Trp-98 contributes to the substrate binding site. Residues 113–118 and His-133 each bind FMN; that span reads STGTGG.

The protein belongs to the WrbA family. The cofactor is FMN.

It carries out the reaction a quinone + NADH + H(+) = a quinol + NAD(+). The enzyme catalyses a quinone + NADPH + H(+) = a quinol + NADP(+). The chain is NAD(P)H dehydrogenase (quinone) from Salmonella agona (strain SL483).